The chain runs to 137 residues: MLLPKRTKYRRPHRIKYEGKAKGNTKVDFGEFGLKSLDGAWITNRQIEAARIAMTRYMKRWGKVWIRIFPHMAKTKKPLEVRMGSGKGSPEEWVAVVKTGTVMFEVAGVSEETAREALRLAMHKLPVRCKIVKKGEE.

It belongs to the universal ribosomal protein uL16 family. Part of the 50S ribosomal subunit.

Its function is as follows. Binds 23S rRNA and is also seen to make contacts with the A and possibly P site tRNAs. This is Large ribosomal subunit protein uL16 from Spiroplasma citri.